The sequence spans 809 residues: Endoplasmin homolog (809 aa).

Positions 1–18 are cleaved as a signal peptide; it reads MRKWALSCALLLVLLLTT. Asn-111, Asp-155, Asn-168, and Phe-200 together coordinate ATP. Asn-111 carries N-linked (GlcNAc...) asparagine glycosylation. Acidic residues predominate over residues 293–320; that stretch reads VPADEEESNEEEESTTETTEEEETEDDE. The segment at 293-329 is disordered; that stretch reads VPADEEESNEEEESTTETTEEEETEDDEEKKPKTKTV. Residues Asn-410, Asn-450, and Asn-617 are each glycosylated (N-linked (GlcNAc...) asparagine). Positions 766–809 are disordered; the sequence is SLDLSPDAAVEEEEEVEEPEVEEKESAKQEAEEPEHEQYDKDEL. Positions 774 to 788 are enriched in acidic residues; it reads AVEEEEEVEEPEVEE. A compositionally biased stretch (basic and acidic residues) spans 789–809; sequence KESAKQEAEEPEHEQYDKDEL. The Prevents secretion from ER motif lies at 806 to 809; sequence KDEL.

The protein belongs to the heat shock protein 90 family.

The protein resides in the endoplasmic reticulum lumen. In terms of biological role, may have a molecular chaperone role in the processing of secreted materials. The protein is Endoplasmin homolog of Hordeum vulgare (Barley).